The sequence spans 161 residues: M-phase phosphoprotein 6 (161 aa).

Glycyl lysine isopeptide (Lys-Gly) (interchain with G-Cter in SUMO2) cross-links involve residues lysine 37 and lysine 86. Serine 111 is modified (phosphoserine). The short motif at 117-134 is the Nuclear localization signal element; it reads RRYETLVGTIGKKFVKKR. Glycyl lysine isopeptide (Lys-Gly) (interchain with G-Cter in SUMO2) cross-links involve residues lysine 128, lysine 151, and lysine 154.

It belongs to the MPP6 family. As to quaternary structure, associates with the RNA exosome complex, mediated by EXOSC3. Interacts with ARHGAP18. Interacts with exosome cofactors EXOSC10 and MTREX. Post-translationally, phosphorylated in M (mitotic) phase.

It is found in the nucleus. Its subcellular location is the nucleolus. It localises to the cytoplasm. Functionally, RNA-binding protein that associates with the RNA exosome complex. Involved in the 3'-processing of the 7S pre-RNA to the mature 5.8S rRNA and plays a role in recruiting the RNA exosome complex to pre-rRNA; this function may include C1D. This is M-phase phosphoprotein 6 from Mus musculus (Mouse).